Here is a 448-residue protein sequence, read N- to C-terminus: Nucleoprotein (448 aa).

The segment at 1-55 is disordered; it reads MSFTPGKQSSSRASSGNRSGNGILKWADQSDQSRNVQTRGRRAQPKQTATSQQPS. Residues 9-22 are compositionally biased toward low complexity; sequence SSSRASSGNRSGNG. Polar residues-rich tracts occupy residues 29 to 38 and 45 to 55; these read QSDQSRNVQT and PKQTATSQQPS. The segment at 52–194 is RNA-binding; it reads QQPSGGNVVP…GYYIEGSGRS (143 aa). In terms of domain architecture, CoV N NTD spans 61–190; the sequence is PYYSWFSGIT…VLPQGYYIEG (130 aa). 3 residues coordinate RNA: R106, R122, and R164. The disordered stretch occupies residues 157-231; sequence TPADILDRDP…RTPTSGVTPD (75 aa). S167 is subject to Phosphoserine; by host. Residue T174 is modified to Phosphothreonine; by host. S191 carries the post-translational modification Phosphoserine; by host. The segment covering 193–223 has biased composition (low complexity); the sequence is RSAPNSRSTSRASSRASSAGSRSRANSGNRT. Positions 259–384 constitute a CoV N CTD domain; sequence AKEIRQKILN…ENLNAYQQQD (126 aa). The dimerization stretch occupies residues 266–384; sequence ILNKPRQKRS…ENLNAYQQQD (119 aa). The interval 385–448 is disordered; it reads GMMNMSPKPQ…EPYTEDTSEI (64 aa). S390 carries the phosphoserine; by host modification. Polar residues predominate over residues 399–409; it reads QKNGQGENDNI. The segment covering 422 to 439 has biased composition (basic and acidic residues); the sequence is KSRELTAEDISLLKKMDE. S423 is subject to Phosphoserine; by host. T427 is modified (phosphothreonine; by host).

This sequence belongs to the betacoronavirus nucleocapsid protein family. In terms of assembly, homooligomer. Both monomeric and oligomeric forms interact with RNA. Interacts with protein M. Interacts with NSP3; this interaction serves to tether the genome to the newly translated replicase-transcriptase complex at a very early stage of infection. In terms of processing, ADP-ribosylated. The ADP-ribosylation is retained in the virion during infection. Post-translationally, phosphorylated on serine and threonine residues.

It is found in the virion. The protein localises to the host endoplasmic reticulum-Golgi intermediate compartment. It localises to the host Golgi apparatus. Packages the positive strand viral genome RNA into a helical ribonucleocapsid (RNP) and plays a fundamental role during virion assembly through its interactions with the viral genome and membrane protein M. Plays an important role in enhancing the efficiency of subgenomic viral RNA transcription as well as viral replication. The chain is Nucleoprotein from Bovine coronavirus (strain F15) (BCoV).